A 131-amino-acid polypeptide reads, in one-letter code: MAKANTRKTRRKKERKNIEHGCAHIKSTFNNSIVTITDAVGNALSWSSAGALGFKGSRKSTPFAAQMAAETAATAAMEHGLKSIEVYVKGPGAGREAAIRSLQAAGLEITLIKDVTPIPHNGCRPPKRRRV.

The protein belongs to the universal ribosomal protein uS11 family. In terms of assembly, part of the 30S ribosomal subunit. Interacts with proteins S7 and S18. Binds to IF-3.

Its function is as follows. Located on the platform of the 30S subunit, it bridges several disparate RNA helices of the 16S rRNA. Forms part of the Shine-Dalgarno cleft in the 70S ribosome. In Clostridium novyi (strain NT), this protein is Small ribosomal subunit protein uS11.